Here is a 282-residue protein sequence, read N- to C-terminus: Short-chain dehydrogenase/reductase prx7 (282 aa).

6 residues coordinate NADP(+): asparagine 23, asparagine 70, tyrosine 150, lysine 154, valine 183, and threonine 185. Tyrosine 150 acts as the Proton acceptor in catalysis. The active-site Lowers pKa of active site Tyr is lysine 154.

This sequence belongs to the short-chain dehydrogenases/reductases (SDR) family.

It functions in the pathway sesquiterpene biosynthesis. Its function is as follows. Short-chain dehydrogenase/reductase; part of the gene cluster that mediates the biosynthesis of PR-toxin, a bicyclic sesquiterpene belonging to the eremophilane class and acting as a mycotoxin. The first step of the pathway is catalyzed by the aristolochene synthase which performs the cyclization of trans,trans-farnesyl diphosphate (FPP) to the bicyclic sesquiterpene aristolochene. Following the formation of aristolochene, the non-oxygenated aristolochene is converted to the trioxygenated intermediate eremofortin B, via 7-epi-neopetasone. This conversion appears to involve three enzymes, a hydroxysterol oxidase-like enzyme, the quinone-oxidase prx3 that forms the quinone-type-structure in the bicyclic nucleus of aristolochene with the C8-oxo group and the C-3 hydroxyl group, and the P450 monooxygenase prx9 that introduces the epoxide at the double bond between carbons 1 and 2. No monoxy or dioxy-intermediates have been reported to be released to the broth, so these three early oxidative reactions may be coupled together. Eremofortin B is further oxidized by another P450 monooxygenase, that introduces a second epoxide between carbons 7 and 11 prior to acetylation to eremofortin A by the acetyltransferase prx11. The second epoxidation may be performed by a second P450 monooxygenase. After the acetylation step, eremofortin A is converted to eremofortin C and then to PR-toxin. First the conversion of eremofortin A to eremofortin C proceeds by oxidation of the side chain of the molecule at C-12 and is catalyzed by the short-chain oxidoreductase prx1. The cytochrome P450 monooxygenase prx8 also plays a role in this step. The primary alcohol formed at C-12 is finally oxidized by the short-chain alcohol dehydrogenase prx4 that forms PR-toxin. In Penicillium rubens (strain ATCC 28089 / DSM 1075 / NRRL 1951 / Wisconsin 54-1255) (Penicillium chrysogenum), this protein is Short-chain dehydrogenase/reductase prx7.